A 404-amino-acid chain; its full sequence is Deoxyguanosinetriphosphate triphosphohydrolase-like protein 1 (404 aa).

The region spanning R75–N219 is the HD domain.

Belongs to the dGTPase family. Type 2 subfamily.

In Mesorhizobium japonicum (strain LMG 29417 / CECT 9101 / MAFF 303099) (Mesorhizobium loti (strain MAFF 303099)), this protein is Deoxyguanosinetriphosphate triphosphohydrolase-like protein 1.